Consider the following 395-residue polypeptide: F-box/kelch-repeat protein At3g13680 (395 aa).

The F-box domain maps to Met1–Ala47. 4 Kelch repeats span residues Ile154–Gly202, Lys210–Ala256, Val265–Glu314, and Ile337–Leu383.

In Arabidopsis thaliana (Mouse-ear cress), this protein is F-box/kelch-repeat protein At3g13680.